The sequence spans 333 residues: MVTIKDIAKLANVSHTTVSRALNNSPYIKEHTKKKILELAEQLNYTPNVNAKSLAMQKSHTIGLFFTSITNGTSHSFFADTIKGVNQAISEDYNLYVRGIDDLKNYDSVTPMRYDGIILMSQSDIDNSFIYHIREKNIPLVVLNRDIDDRTITNILSNDKEGSQEAVEYFIQSGHQDIAIIEGIEGFKSSQQRKEGYLSALIQHHIPIKHEYSVKGQYDMESGFQAMERLLALPNPPTAVFCSNDDMAIGAMNAIFAKGLRVPDDISVIGFDDIGFSQYITPRLSTVKRPVEKISVLGAQKLLSLISEPETKAEKILENTEFMVRDSVRRLTT.

Residues 2–56 (VTIKDIAKLANVSHTTVSRALNNSPYIKEHTKKKILELAEQLNYTPNVNAKSLAM) enclose the HTH lacI-type domain. Residues 4-23 (IKDIAKLANVSHTTVSRALN) constitute a DNA-binding region (H-T-H motif).

Transcriptional repressor for the exu locus which is required for galacturonate utilization. This chain is Probable HTH-type transcriptional repressor ExuR (exuR), found in Bacillus subtilis (strain 168).